A 362-amino-acid chain; its full sequence is Histidinol-phosphate aminotransferase (362 aa).

Lys219 is subject to N6-(pyridoxal phosphate)lysine.

This sequence belongs to the class-II pyridoxal-phosphate-dependent aminotransferase family. Histidinol-phosphate aminotransferase subfamily. In terms of assembly, homodimer. Requires pyridoxal 5'-phosphate as cofactor.

It carries out the reaction L-histidinol phosphate + 2-oxoglutarate = 3-(imidazol-4-yl)-2-oxopropyl phosphate + L-glutamate. It participates in amino-acid biosynthesis; L-histidine biosynthesis; L-histidine from 5-phospho-alpha-D-ribose 1-diphosphate: step 7/9. The polypeptide is Histidinol-phosphate aminotransferase (Maricaulis maris (strain MCS10) (Caulobacter maris)).